The chain runs to 355 residues: NADH dehydrogenase [ubiquinone] 1 alpha subcomplex subunit 10, mitochondrial (355 aa).

A mitochondrion-targeting transit peptide spans 1–35; it reads MALRLLKLGATSASARVVAAGAQRVRGIHSSGQCK. The residue at position 250 (Ser-250) is a Phosphoserine; by PINK1. Lys-285 is subject to N6-succinyllysine.

This sequence belongs to the complex I NDUFA10 subunit family. As to quaternary structure, complex I is composed of 45 different subunits. This a component of the hydrophobic protein fraction. FAD is required as a cofactor. Phosphorylation at Ser-250 by PINK1 is required for the binding and/or reduction of the complex I substrate ubiquinone.

It localises to the mitochondrion matrix. Accessory subunit of the mitochondrial membrane respiratory chain NADH dehydrogenase (Complex I), that is believed not to be involved in catalysis. Complex I functions in the transfer of electrons from NADH to the respiratory chain. The immediate electron acceptor for the enzyme is believed to be ubiquinone. The protein is NADH dehydrogenase [ubiquinone] 1 alpha subcomplex subunit 10, mitochondrial (NDUFA10) of Gorilla gorilla gorilla (Western lowland gorilla).